The primary structure comprises 1250 residues: Phospholipid-transporting ATPase IC (1250 aa).

2 stretches are compositionally biased toward acidic residues: residues 1–13 (MDTDYESTYEDDS) and 24–40 (SDDETDDELDSPQTDEP). A disordered region spans residues 1–52 (MDTDYESTYEDDSQVPNDDVVPYSDDETDDELDSPQTDEPEQNRRNVQAEQS). The Cytoplasmic segment spans residues 1 to 133 (MDTDYESTYE…VLLILQTIPQ (133 aa)). Residues 134-154 (ISTVTWSTTLIPLLLVLGITA) traverse the membrane as a helical segment. Residues 155–338 (IKDLVDDIAR…TKIDYLMNYM (184 aa)) lie on the Exoplasmic loop side of the membrane. The chain crosses the membrane as a helical span at residues 339-359 (VYTIFVLLILAAAGLAIGQTF). Topologically, residues 360-385 (WEAKLGAANVSWYLYDGNNYSPSYRG) are cytoplasmic. Residues 386 to 406 (FLAFWGYIIVLNTMVPISLYV) traverse the membrane as a helical segment. At 407 to 956 (SVEVIRLGQS…KFLRYFFYKN (550 aa)) the chain is on the exoplasmic loop side. Aspartate 454 functions as the 4-aspartylphosphate intermediate in the catalytic mechanism. ATP contacts are provided by aspartate 454, lysine 455, threonine 456, glutamate 553, phenylalanine 594, lysine 617, arginine 650, threonine 730, glycine 731, aspartate 732, arginine 865, and lysine 871. Aspartate 454 provides a ligand contact to Mg(2+). Residue threonine 456 coordinates Mg(2+). Aspartate 891 lines the Mg(2+) pocket. Residues asparagine 894 and aspartate 895 each contribute to the ATP site. Aspartate 895 provides a ligand contact to Mg(2+). The helical transmembrane segment at 957–977 (FSFTLVHFWYSFFNGFSAQTV) threads the bilayer. Residues 978–980 (YED) lie on the Cytoplasmic side of the membrane. Residues 981-1001 (WFITLYNVLYSSLPVLLVGLL) form a helical membrane-spanning segment. Over 1002-1034 (DQDVSDKLSLAFPRLYVPGQKDLLFNYKKFFLS) the chain is Exoplasmic loop. Residues 1035–1055 (LFHGIVTSLIIFFIPYGAFLL) traverse the membrane as a helical segment. Residues 1056–1069 (TMGQDGEAPSDYQS) lie on the Cytoplasmic side of the membrane. Residues 1070-1090 (FAVTTATALVITVNFQIGLDT) form a helical membrane-spanning segment. Topologically, residues 1091-1092 (SY) are exoplasmic loop. The chain crosses the membrane as a helical span at residues 1093 to 1113 (WTFVNAFSIFGSIAIYFGIMF). Residues 1114–1117 (DLHS) are Cytoplasmic-facing. Residues 1118–1138 (AGIHVLFPSMFIFTGAAPNAL) form a helical membrane-spanning segment. At 1139-1140 (RQ) the chain is on the exoplasmic loop side. Residues 1141–1161 (PYLWLTIILTVAFCLLPIVAL) form a helical membrane-spanning segment. Over 1162-1250 (RFLAKTIWPS…AQITHFTPQT (89 aa)) the chain is Cytoplasmic.

This sequence belongs to the cation transport ATPase (P-type) (TC 3.A.3) family. Type IV subfamily. Component of a P4-ATPase flippase complex which consists of a catalytic alpha subunit and an accessory beta subunit. The flippase ATP8B1:TMEM30A complex can form an intermediate phosphoenzyme in vitro. Also interacts with beta subunit TMEM30B. It depends on Mg(2+) as a cofactor.

The protein localises to the cell membrane. It is found in the apical cell membrane. It localises to the cell projection. The protein resides in the stereocilium. Its subcellular location is the endoplasmic reticulum. The protein localises to the golgi apparatus. The catalysed reaction is ATP + H2O + phospholipidSide 1 = ADP + phosphate + phospholipidSide 2.. It catalyses the reaction a 1,2-diacyl-sn-glycero-3-phospho-L-serine(out) + ATP + H2O = a 1,2-diacyl-sn-glycero-3-phospho-L-serine(in) + ADP + phosphate + H(+). In terms of biological role, catalytic component of a P4-ATPase flippase complex which catalyzes the hydrolysis of ATP coupled to the transport of aminophospholipids from the outer to the inner leaflet of various membranes and ensures the maintenance of asymmetric distribution of phospholipids. Phospholipid translocation also seems to be implicated in vesicle formation and in uptake of lipid signaling molecules. May also participate in the establishment of the canalicular membrane integrity by ensuring asymmetric distribution of phospholipids in the canicular membrane. The protein is Phospholipid-transporting ATPase IC (atp8b1) of Xenopus tropicalis (Western clawed frog).